The sequence spans 374 residues: Coiled-coil domain-containing protein 89 (374 aa).

Residues 1–40 form a disordered region; the sequence is MRAPMLQKQQAPRMDTPPPEERLEKQNEKLNNQEEETEFK. The residue at position 16 (T16) is a Phosphothreonine. The segment covering 19–32 has biased composition (basic and acidic residues); the sequence is PEERLEKQNEKLNN. A coiled-coil region spans residues 20 to 351; sequence EERLEKQNEK…DELRLQSEAF (332 aa).

Belongs to the CCDC89 family. Interacts with HEY1.

It localises to the cytoplasm. Its subcellular location is the nucleus. This chain is Coiled-coil domain-containing protein 89 (CCDC89), found in Homo sapiens (Human).